Consider the following 140-residue polypeptide: Pro-vaccinia growth factor (140 aa).

A signal peptide spans 1-18 (MLINYLMLLFAAMIIRSF). Topologically, residues 19 to 100 (ADSGNAIETT…SEKPNTTTSY (82 aa)) are extracellular. The N-linked (GlcNAc...) asparagine; by host glycan is linked to Asn-34. One can recognise an EGF-like domain in the interval 41–81 (AIRLCGPEGDGYCLHGDCIHARDIDGMYCRCSHGYTGIRCQ). 3 disulfide bridges follow: Cys-45/Cys-58, Cys-53/Cys-69, and Cys-71/Cys-80. Asn-95 is a glycosylation site (N-linked (GlcNAc...) asparagine; by host). A helical membrane pass occupies residues 101 to 121 (IPSPGIMLVLVGIIIITCCLL). Over 122 to 140 (SVYRFTRRTKLPLQDMVVP) the chain is Cytoplasmic.

The protein belongs to the orthopoxvirus OPG019 family. In terms of assembly, vaccinia growth factor interacts with host EGFR and promotes EGFR dimerization.

The protein resides in the host membrane. Its subcellular location is the secreted. Stimulates cellular proliferation (hyperplasia)and mobility around infected cells to promote rapid and efficient spread of infection. This effect is beneficial for virus replication in vivo, because poxviruses replicate possibly better in proliferating cells than in quiescent cells. Acts by binding host EGFR, inducing its dimerization, autophosphorylation and leading to activation of several cellular pathways regulating cell proliferation or cell survival. The activation by host EGFR of mitogen activated protein kinases (MAPK) and extracellular-signal regulated kinases (ERK) are essential for the positive effect of vaccinia growth factor on poxvirus virulence in vivo. The protein is Pro-vaccinia growth factor (OPG019) of Homo sapiens (Human).